Consider the following 406-residue polypeptide: MEIKTSRIVILILVVVIPAILIFRNPINLGLDLRGGTSVVLEAQEEDGKKLQPDTMDKVREIVQRRVDGLGVSEPVIQKSGENRLIVELAGVKDAQEAIDLIGTTAKLEFKIKTGDNSYGPTVLDGSAIKNAYVQQDQFGKPMIGFELNDEGAVKFAEITRTNMGKQLAIMLDGKEQSAPVIQSEIPGGKGSISGSFTYESAQNLANLLKAGALPVNIQIMETRSVDASLGAESIKATKMAAMIALVLVSLFMLAVYRVAGFVADLALCVFGILTAGLMCAIGTTLTLPGIAGFILSLGMAVDANVIIFERIKDEIMEGKRFQDCIDDGFNRAFPAILDGNITTLLITMVLFFFGTGPVRGFAVILTIGVLVSMFTAIFITKIIVKIFVNIFHLNGEKLFGLKGVE.

A run of 6 helical transmembrane segments spans residues 8 to 28, 240 to 260, 262 to 282, 289 to 309, 334 to 354, and 361 to 381; these read IVIL…NPIN, MAAM…YRVA, FVAD…MCAI, PGIA…VIIF, FPAI…LFFF, and GFAV…IFIT.

This sequence belongs to the SecD/SecF family. SecD subfamily. Forms a complex with SecF. Part of the essential Sec protein translocation apparatus which comprises SecA, SecYEG and auxiliary proteins SecDF. Other proteins may also be involved.

Its subcellular location is the cell inner membrane. Part of the Sec protein translocase complex. Interacts with the SecYEG preprotein conducting channel. SecDF uses the proton motive force (PMF) to complete protein translocation after the ATP-dependent function of SecA. The chain is Protein translocase subunit SecD from Sebaldella termitidis (strain ATCC 33386 / NCTC 11300).